The primary structure comprises 20 residues: Citrate synthase (20 aa).

This sequence belongs to the citrate synthase family. Homohexamer.

It catalyses the reaction oxaloacetate + acetyl-CoA + H2O = citrate + CoA + H(+). It functions in the pathway carbohydrate metabolism; tricarboxylic acid cycle; isocitrate from oxaloacetate: step 1/2. Allosterically inhibited by NADH. This Streptomyces hygroscopicus protein is Citrate synthase (gltA).